Here is a 462-residue protein sequence, read N- to C-terminus: Transcript termination protein A18 (462 aa).

In terms of domain architecture, Helicase ATP-binding spans 99 to 255 (KCKEKRPLYT…NSIINFIKFS (157 aa)). 112–119 (LACGFGKT) contributes to the ATP binding site. The short motif at 205–208 (DEAH) is the DEAH box element. In terms of domain architecture, Helicase C-terminal spans 308–459 (IVDKIIETFK…ATKLGFREVS (152 aa)).

The protein belongs to the helicase family. Poxviruses subfamily. In terms of assembly, interacts with G2. Might be part of a transcription complex composed at least of G2, A18, and H5.

It is found in the virion. Its function is as follows. DNA helicase which seems to act as a postreplicative transcription termination factor. Involved in ATP-dependent release of nascent RNA. Forms a stable complex with single-stranded DNA, and to a lesser extent RNA. The sequence is that of Transcript termination protein A18 from Vertebrata (FPV).